The following is a 189-amino-acid chain: Peptidyl-tRNA hydrolase (189 aa).

The Proton acceptor role is filled by His-19. Tyr-64, Asn-66, and Asn-112 together coordinate tRNA.

Belongs to the PTH family. As to quaternary structure, monomer.

The protein resides in the cytoplasm. It carries out the reaction an N-acyl-L-alpha-aminoacyl-tRNA + H2O = an N-acyl-L-amino acid + a tRNA + H(+). In terms of biological role, hydrolyzes ribosome-free peptidyl-tRNAs (with 1 or more amino acids incorporated), which drop off the ribosome during protein synthesis, or as a result of ribosome stalling. Catalyzes the release of premature peptidyl moieties from peptidyl-tRNA molecules trapped in stalled 50S ribosomal subunits, and thus maintains levels of free tRNAs and 50S ribosomes. The sequence is that of Peptidyl-tRNA hydrolase from Gluconobacter oxydans (strain 621H) (Gluconobacter suboxydans).